The following is a 233-amino-acid chain: Large ribosomal subunit protein uL1 (233 aa).

The protein belongs to the universal ribosomal protein uL1 family. In terms of assembly, part of the 50S ribosomal subunit.

Its function is as follows. Binds directly to 23S rRNA. The L1 stalk is quite mobile in the ribosome, and is involved in E site tRNA release. Protein L1 is also a translational repressor protein, it controls the translation of the L11 operon by binding to its mRNA. In Brucella suis (strain ATCC 23445 / NCTC 10510), this protein is Large ribosomal subunit protein uL1.